Here is a 547-residue protein sequence, read N- to C-terminus: Tripartite motif-containing protein 5 (547 aa).

Ala-2 is modified (N-acetylalanine). Residues 15–59 form an RING-type zinc finger; that stretch reads CPICLDLLTEPLSLDCGHSFCQACITADHKESTLHQGERSCPLCR. Ser-86 carries the post-translational modification Phosphoserine. A B box-type zinc finger spans residues 91-132; sequence QKVDRCARHGEKLLLFCQQHGNVICWLCERSQEHRGHSTFLV. Residues Cys-96, His-99, Cys-118, and His-124 each contribute to the Zn(2+) site. Residues 132–224 are a coiled coil; that stretch reads VEEVAQKYRE…LAQSENDMVL (93 aa). Residues 186–199 are required for interaction with GABARAP and for autophagy; the sequence is FKQLRDILDCEESN. The B30.2/SPRY domain maps to 280-547; sequence PNLKGMLQVF…LPMTLCSPSS (268 aa).

Belongs to the TRIM/RBCC family. Can form homodimers and homotrimers. In addition to lower-order dimerization, also exhibits a higher-order multimerization and both low- and high-order multimerizations are essential for its restriction activity. Interacts with BTBD1 and BTBD2. Interacts with PSMC4, PSMC5, PSMD7 and HSPA8/HSC70. Interacts (via B30.2/SPRY domain) with HSPA1A/B. Interacts with PSMC2, MAP3K7/TAK1, TAB2 and TAB3. Interacts with SQSTM1. Interacts with TRIM6 and TRIM34. Interacts with ULK1 (phosphorylated form), GABARAP, GABARAPL1, GABARAPL2, MAP1LC3A, MAP1LC3C and BECN1. Degraded in a proteasome-independent fashion in the absence of viral infection but in a proteasome-dependent fashion following exposure to restriction sensitive virus. In terms of processing, autoubiquitinated in a RING finger- and UBE2D2-dependent manner. Monoubiquitinated by TRIM21. Deubiquitinated by Yersinia YopJ. Ubiquitination may not lead to proteasomal degradation.

It localises to the cytoplasm. It is found in the nucleus. The enzyme catalyses S-ubiquitinyl-[E2 ubiquitin-conjugating enzyme]-L-cysteine + [acceptor protein]-L-lysine = [E2 ubiquitin-conjugating enzyme]-L-cysteine + N(6)-ubiquitinyl-[acceptor protein]-L-lysine.. It participates in protein modification; protein ubiquitination. Functionally, capsid-specific restriction factor that prevents infection from non-host-adapted retroviruses. Blocks viral replication early in the life cycle, after viral entry but before reverse transcription. In addition to acting as a capsid-specific restriction factor, also acts as a pattern recognition receptor that activates innate immune signaling in response to the retroviral capsid lattice. Binding to the viral capsid triggers its E3 ubiquitin ligase activity, and in concert with the heterodimeric ubiquitin conjugating enzyme complex UBE2V1-UBE2N (also known as UBC13-UEV1A complex) generates 'Lys-63'-linked polyubiquitin chains, which in turn are catalysts in the autophosphorylation of the MAP3K7/TAK1 complex (includes TAK1, TAB2, and TAB3). Activation of the MAP3K7/TAK1 complex by autophosphorylation results in the induction and expression of NF-kappa-B and MAPK-responsive inflammatory genes, thereby leading to an innate immune response in the infected cell. Plays a role in regulating autophagy through activation of autophagy regulator BECN1 by causing its dissociation from its inhibitors BCL2 and TAB2. In Lagothrix lagotricha (Brown woolly monkey), this protein is Tripartite motif-containing protein 5 (TRIM5).